Reading from the N-terminus, the 222-residue chain is Acyl-protein thioesterase 1 homolog 2 (222 aa).

Active-site charge relay system residues include Ser116, Asp169, and His202.

It belongs to the AB hydrolase superfamily. AB hydrolase 2 family.

It localises to the cytoplasm. It is found in the nucleus. The enzyme catalyses S-hexadecanoyl-L-cysteinyl-[protein] + H2O = L-cysteinyl-[protein] + hexadecanoate + H(+). Its function is as follows. Hydrolyzes fatty acids from S-acylated cysteine residues in proteins with a strong preference for palmitoylated G-alpha proteins over other acyl substrates. Mediates the deacylation of G-alpha proteins such as GPA1 in vivo, but has weak or no activity toward palmitoylated Ras proteins. Has weak lysophospholipase activity in vitro; however such activity may not exist in vivo. The protein is Acyl-protein thioesterase 1 homolog 2 of Dictyostelium discoideum (Social amoeba).